Consider the following 620-residue polypeptide: PAN2-PAN3 deadenylation complex subunit PAN3 (620 aa).

The C3H1-type zinc finger occupies 7–36 (SAKGTLCKNILIYGYCKYENKGCAFSHRRN). Disordered stretches follow at residues 39–73 (ANSGPGATPAKSVATTPTSDKRKFNVNTPSFQPST) and 95–168 (VFVP…QPGP). 2 stretches are compositionally biased toward polar residues: residues 63–73 (NVNTPSFQPST) and 101–126 (TPASPAQSTPSTGNQEQPMPTSTVSN). Residues 226 to 482 (QSYPGGPEIV…LESYIRKHLA (257 aa)) are pseudokinase domain. ATP-binding positions include Arg-274, 323–330 (DYYPNAST), and 380–381 (SK). The stretch at 483–521 (IRLLDVVDMLEDSNDYLESQLSTELENARLVRLMTKINF) forms a coiled coil. The segment at 522 to 620 (IVDRPEWDNE…SVFRTITRGK (99 aa)) is knob domain.

It belongs to the protein kinase superfamily. PAN3 family. As to quaternary structure, homodimer. Forms a heterotrimer with a catalytic subunit PAN2 to form the poly(A)-nuclease (PAN) deadenylation complex. Interacts (via PAM-2 motif) with poly(A)-binding protein PAB1 (via PABC domain), conferring substrate specificity of the enzyme complex.

It is found in the cytoplasm. Regulatory subunit of the poly(A)-nuclease (PAN) deadenylation complex, one of two cytoplasmic mRNA deadenylases involved in mRNA turnover. PAN specifically shortens poly(A) tails of RNA and the activity is stimulated by poly(A)-binding protein PAB1. PAN deadenylation is followed by rapid degradation of the shortened mRNA tails by the CCR4-NOT complex. Deadenylated mRNAs are then degraded by two alternative mechanisms, namely exosome-mediated 3'-5' exonucleolytic degradation, or deadenylation-dependent mRNA decaping and subsequent 5'-3' exonucleolytic degradation by XRN1. May also be involved in post-transcriptional maturation of mRNA poly(A) tails. PAN3 acts as a positive regulator for PAN activity, recruiting the catalytic subunit PAN2 to mRNA via its interaction with RNA and with PAB1. This Meyerozyma guilliermondii (strain ATCC 6260 / CBS 566 / DSM 6381 / JCM 1539 / NBRC 10279 / NRRL Y-324) (Yeast) protein is PAN2-PAN3 deadenylation complex subunit PAN3.